Reading from the N-terminus, the 836-residue chain is Probable ribonuclease ZC3H12B (836 aa).

The interval 1 to 92 is disordered; it reads MTATAEVETP…SPCLDRPSFS (92 aa). The span at 8–28 shows a compositional bias: basic and acidic residues; it reads ETPKMEKSASKEEKQQPKQDS. Acidic residues predominate over residues 35-46; it reads DSEEWMSSESDP. Residues 50–60 show a composition bias toward polar residues; that stretch reads SLKSSDNSKSC. Positions 70-80 are enriched in basic residues; the sequence is KEMHSKPHRQL. One can recognise an RNase NYN domain in the interval 190–345; it reads LRPVVIDGSN…LGRHGPSLEN (156 aa). The segment at 355–380 adopts a C3H1-type zinc-finger fold; the sequence is EHKKQPCPYGKKCTYGHKCKYYHPER.

This sequence belongs to the ZC3H12 family. Mg(2+) is required as a cofactor.

Its function is as follows. May function as RNase and regulate the levels of target RNA species. In Homo sapiens (Human), this protein is Probable ribonuclease ZC3H12B (ZC3H12B).